We begin with the raw amino-acid sequence, 376 residues long: Chaperone protein DnaJ 2 (376 aa).

In terms of domain architecture, J spans 8-72 (DYYEILGVPR…EKRKLYDMYG (65 aa)). Residues 143-219 (GTTVPIEVER…CTGRGYGLVK (77 aa)) form a CR-type zinc finger. C156, C159, C172, C175, C194, C197, C207, and C210 together coordinate Zn(2+). CXXCXGXG motif repeat units follow at residues 156-163 (CSACGGTG), 172-179 (CPTCGGRG), 194-201 (CPTCGGEG), and 207-214 (CHACTGRG).

The protein belongs to the DnaJ family. In terms of assembly, homodimer. It depends on Zn(2+) as a cofactor.

It localises to the cytoplasm. Functionally, participates actively in the response to hyperosmotic and heat shock by preventing the aggregation of stress-denatured proteins and by disaggregating proteins, also in an autonomous, DnaK-independent fashion. Unfolded proteins bind initially to DnaJ; upon interaction with the DnaJ-bound protein, DnaK hydrolyzes its bound ATP, resulting in the formation of a stable complex. GrpE releases ADP from DnaK; ATP binding to DnaK triggers the release of the substrate protein, thus completing the reaction cycle. Several rounds of ATP-dependent interactions between DnaJ, DnaK and GrpE are required for fully efficient folding. Also involved, together with DnaK and GrpE, in the DNA replication of plasmids through activation of initiation proteins. This chain is Chaperone protein DnaJ 2, found in Aquifex aeolicus (strain VF5).